The primary structure comprises 337 residues: Holliday junction branch migration complex subunit RuvB (337 aa).

Residues 1–181 are large ATPase domain (RuvB-L); the sequence is MQRLVEIERF…FGMNFRMQFY (181 aa). Residues Leu-20, Arg-21, Gly-62, Lys-65, Thr-66, Thr-67, 128 to 130, Arg-171, Tyr-181, and Arg-218 contribute to the ATP site; that span reads EDF. Thr-66 contributes to the Mg(2+) binding site. Residues 182 to 252 are small ATPAse domain (RuvB-S); the sequence is SPEELSKIIS…RAQYALDELG (71 aa). The tract at residues 255 to 337 is head domain (RuvB-H); the sequence is SYGFDEMDIK…MPALDDGGLF (83 aa). Residues Arg-309 and Arg-314 each contribute to the DNA site.

It belongs to the RuvB family. Homohexamer. Forms an RuvA(8)-RuvB(12)-Holliday junction (HJ) complex. HJ DNA is sandwiched between 2 RuvA tetramers; dsDNA enters through RuvA and exits via RuvB. An RuvB hexamer assembles on each DNA strand where it exits the tetramer. Each RuvB hexamer is contacted by two RuvA subunits (via domain III) on 2 adjacent RuvB subunits; this complex drives branch migration. In the full resolvosome a probable DNA-RuvA(4)-RuvB(12)-RuvC(2) complex forms which resolves the HJ.

It localises to the cytoplasm. The enzyme catalyses ATP + H2O = ADP + phosphate + H(+). Functionally, the RuvA-RuvB-RuvC complex processes Holliday junction (HJ) DNA during genetic recombination and DNA repair, while the RuvA-RuvB complex plays an important role in the rescue of blocked DNA replication forks via replication fork reversal (RFR). RuvA specifically binds to HJ cruciform DNA, conferring on it an open structure. The RuvB hexamer acts as an ATP-dependent pump, pulling dsDNA into and through the RuvAB complex. RuvB forms 2 homohexamers on either side of HJ DNA bound by 1 or 2 RuvA tetramers; 4 subunits per hexamer contact DNA at a time. Coordinated motions by a converter formed by DNA-disengaged RuvB subunits stimulates ATP hydrolysis and nucleotide exchange. Immobilization of the converter enables RuvB to convert the ATP-contained energy into a lever motion, pulling 2 nucleotides of DNA out of the RuvA tetramer per ATP hydrolyzed, thus driving DNA branch migration. The RuvB motors rotate together with the DNA substrate, which together with the progressing nucleotide cycle form the mechanistic basis for DNA recombination by continuous HJ branch migration. Branch migration allows RuvC to scan DNA until it finds its consensus sequence, where it cleaves and resolves cruciform DNA. In Sulfurimonas denitrificans (strain ATCC 33889 / DSM 1251) (Thiomicrospira denitrificans (strain ATCC 33889 / DSM 1251)), this protein is Holliday junction branch migration complex subunit RuvB.